A 149-amino-acid polypeptide reads, in one-letter code: Oocyte-expressed protein homolog (149 aa).

Residues 1–23 are disordered; that stretch reads MVDDAGTAESQRGKQTPADSLEQ. The segment covering 8-18 has biased composition (polar residues); it reads AESQRGKQTPA. Residues 49–110 enclose the KH; atypical domain; it reads PLVFYLEAWL…SVQNRVKSML (62 aa).

The protein belongs to the KHDC1 family. Component of the subcortical maternal complex (SCMC), at least composed of NLRP5, KHDC3, OOEP, and TLE6. Within the complex, interacts with NLRP5, KHDC3 and TLE6. As part of the SCMC interacts with the SCMC-associated protein NLRP4F. The SCMC may facilitate translocation of its components between the nuclear and cytoplasmic compartments. Forms a scaffold complex with KHDC3/FILIA, and interacts with BLM and TRIM25 at DNA replication forks.

It is found in the cytoplasm. It localises to the nucleus. Functionally, component of the subcortical maternal complex (SCMC), a multiprotein complex that plays a key role in early embryonic development. The SCMC complex is a structural constituent of cytoplasmic lattices, which consist in fibrous structures found in the cytoplasm of oocytes and preimplantation embryos. They are required to store maternal proteins critical for embryonic development, such as proteins that control epigenetic reprogramming of the preimplantation embryo, and prevent their degradation or activation. As part of the OOEP-KHDC3 scaffold, recruits BLM and TRIM25 to DNA replication forks, thereby promoting the ubiquitination of BLM by TRIM25, enhancing BLM retainment at replication forks and therefore promoting stalled replication fork restart. Positively regulates the homologous recombination-mediated DNA double-strand break (DSB) repair pathway by regulating ATM activation and RAD51 recruitment to DSBs in oocytes. Thereby contributes to oocyte survival and the resumption and completion of meiosis. The polypeptide is Oocyte-expressed protein homolog (OOEP) (Papio anubis (Olive baboon)).